A 101-amino-acid chain; its full sequence is ATP-dependent Clp protease adapter protein ClpS 2 (101 aa).

The protein belongs to the ClpS family. Binds to the N-terminal domain of the chaperone ClpA.

Its function is as follows. Involved in the modulation of the specificity of the ClpAP-mediated ATP-dependent protein degradation. The polypeptide is ATP-dependent Clp protease adapter protein ClpS 2 (Rhizobium meliloti (strain 1021) (Ensifer meliloti)).